The primary structure comprises 479 residues: MAQHTVYFPDAFLTQMREAMPSTLSFDDFLAACQRPLRRSIRVNTLKTSVADFLQLTAPYGWTLTPIPWCEEGFWIERDSEDALPLGSTAEHLSGLFYIQEASSMLPVAALFADGNAPQRVMDVAAAPGSKTTQIAARMNNKGAILANEFSASRVKVLHANISRCGISNVALTHFDGRVFGAAVPEMFDAILLDAPCSGEGVVRKDPDALKNWSPESNQEIAATQRELIDSAFHALRLGGTLVYSTCTLNREENEAVCLWLKETYHDAVEFLPLGDLFPGANKALTEDGFLHVFPQIYDCEGFFVARLRKTQAIPVLPAPKYKVGNFPFSPVKDREAGQIRQAAASVGLNWDENLRLWQRDKELWLFPVGIEALIGKVRFSRLGIKLAETHNKGYRWQHEAVIALASPDNVNAFELTPQEAEEWYRGRDVYPQAAPVADDVLVTFQHQPIGLAKRIGSRLKNSYPRELVRDGKLFTGNA.

S-adenosyl-L-methionine contacts are provided by residues 125 to 131 (AAAPGSK), Glu149, Asp176, and Asp194. The Nucleophile role is filled by Cys247.

This sequence belongs to the class I-like SAM-binding methyltransferase superfamily. RsmB/NOP family.

The protein localises to the cytoplasm. The enzyme catalyses cytidine(1407) in 16S rRNA + S-adenosyl-L-methionine = 5-methylcytidine(1407) in 16S rRNA + S-adenosyl-L-homocysteine + H(+). Its function is as follows. Specifically methylates the cytosine at position 1407 (m5C1407) of 16S rRNA. In Escherichia coli (strain UTI89 / UPEC), this protein is Ribosomal RNA small subunit methyltransferase F.